Here is a 231-residue protein sequence, read N- to C-terminus: Large ribosomal subunit protein uL1 (231 aa).

This sequence belongs to the universal ribosomal protein uL1 family. Part of the 50S ribosomal subunit.

Binds directly to 23S rRNA. The L1 stalk is quite mobile in the ribosome, and is involved in E site tRNA release. Its function is as follows. Protein L1 is also a translational repressor protein, it controls the translation of the L11 operon by binding to its mRNA. The polypeptide is Large ribosomal subunit protein uL1 (Gluconacetobacter diazotrophicus (strain ATCC 49037 / DSM 5601 / CCUG 37298 / CIP 103539 / LMG 7603 / PAl5)).